The primary structure comprises 334 residues: Holliday junction branch migration complex subunit RuvB (334 aa).

The large ATPase domain (RuvB-L) stretch occupies residues 4 to 184 (ADRLIQPQIQ…FGIPLRLEFY (181 aa)). Residues Arg24, Gly65, Lys68, Thr69, Thr70, 131–133 (EDY), Arg174, Tyr184, and Arg221 each bind ATP. Thr69 lines the Mg(2+) pocket. Residues 185 to 255 (NIKDLSTIVT…VAEHALDLLD (71 aa)) are small ATPAse domain (RuvB-S). The head domain (RuvB-H) stretch occupies residues 258–334 (SEGFDYMDRK…YQHFELIKPE (77 aa)). Residues Arg294, Arg313, and Arg318 each contribute to the DNA site.

This sequence belongs to the RuvB family. In terms of assembly, homohexamer. Forms an RuvA(8)-RuvB(12)-Holliday junction (HJ) complex. HJ DNA is sandwiched between 2 RuvA tetramers; dsDNA enters through RuvA and exits via RuvB. An RuvB hexamer assembles on each DNA strand where it exits the tetramer. Each RuvB hexamer is contacted by two RuvA subunits (via domain III) on 2 adjacent RuvB subunits; this complex drives branch migration. In the full resolvosome a probable DNA-RuvA(4)-RuvB(12)-RuvC(2) complex forms which resolves the HJ.

It is found in the cytoplasm. The catalysed reaction is ATP + H2O = ADP + phosphate + H(+). Its function is as follows. The RuvA-RuvB-RuvC complex processes Holliday junction (HJ) DNA during genetic recombination and DNA repair, while the RuvA-RuvB complex plays an important role in the rescue of blocked DNA replication forks via replication fork reversal (RFR). RuvA specifically binds to HJ cruciform DNA, conferring on it an open structure. The RuvB hexamer acts as an ATP-dependent pump, pulling dsDNA into and through the RuvAB complex. RuvB forms 2 homohexamers on either side of HJ DNA bound by 1 or 2 RuvA tetramers; 4 subunits per hexamer contact DNA at a time. Coordinated motions by a converter formed by DNA-disengaged RuvB subunits stimulates ATP hydrolysis and nucleotide exchange. Immobilization of the converter enables RuvB to convert the ATP-contained energy into a lever motion, pulling 2 nucleotides of DNA out of the RuvA tetramer per ATP hydrolyzed, thus driving DNA branch migration. The RuvB motors rotate together with the DNA substrate, which together with the progressing nucleotide cycle form the mechanistic basis for DNA recombination by continuous HJ branch migration. Branch migration allows RuvC to scan DNA until it finds its consensus sequence, where it cleaves and resolves cruciform DNA. The sequence is that of Holliday junction branch migration complex subunit RuvB from Shewanella baltica (strain OS155 / ATCC BAA-1091).